The sequence spans 373 residues: Peptide chain release factor 2 (373 aa).

Gln-251 carries the N5-methylglutamine modification.

It belongs to the prokaryotic/mitochondrial release factor family. Methylated by PrmC. Methylation increases the termination efficiency of RF2.

The protein localises to the cytoplasm. Functionally, peptide chain release factor 2 directs the termination of translation in response to the peptide chain termination codons UGA and UAA. The chain is Peptide chain release factor 2 from Salinispora arenicola (strain CNS-205).